Here is a 154-residue protein sequence, read N- to C-terminus: Crossover junction endodeoxyribonuclease RuvC (154 aa).

Residues aspartate 7, glutamate 67, and aspartate 139 contribute to the active site. Positions 7, 67, and 139 each coordinate Mg(2+).

It belongs to the RuvC family. Homodimer which binds Holliday junction (HJ) DNA. The HJ becomes 2-fold symmetrical on binding to RuvC with unstacked arms; it has a different conformation from HJ DNA in complex with RuvA. In the full resolvosome a probable DNA-RuvA(4)-RuvB(12)-RuvC(2) complex forms which resolves the HJ. The cofactor is Mg(2+).

The protein localises to the cytoplasm. The enzyme catalyses Endonucleolytic cleavage at a junction such as a reciprocal single-stranded crossover between two homologous DNA duplexes (Holliday junction).. Its function is as follows. The RuvA-RuvB-RuvC complex processes Holliday junction (HJ) DNA during genetic recombination and DNA repair. Endonuclease that resolves HJ intermediates. Cleaves cruciform DNA by making single-stranded nicks across the HJ at symmetrical positions within the homologous arms, yielding a 5'-phosphate and a 3'-hydroxyl group; requires a central core of homology in the junction. The consensus cleavage sequence is 5'-(A/T)TT(C/G)-3'. Cleavage occurs on the 3'-side of the TT dinucleotide at the point of strand exchange. HJ branch migration catalyzed by RuvA-RuvB allows RuvC to scan DNA until it finds its consensus sequence, where it cleaves and resolves the cruciform DNA. The chain is Crossover junction endodeoxyribonuclease RuvC from Prochlorococcus marinus (strain MIT 9313).